Consider the following 265-residue polypeptide: ClpXP adapter protein SpxH (265 aa).

The protein belongs to the SpxH family. As to quaternary structure, interacts with Spx.

It localises to the cytoplasm. Functionally, adapter protein required for efficient degradation of Spx by ClpXP under non-stress conditions. Interaction with Spx stabilizes Spx and exposes the C-terminus of Spx for recognition and proteolysis by ClpXP. The chain is ClpXP adapter protein SpxH from Staphylococcus haemolyticus (strain JCSC1435).